Here is a 128-residue protein sequence, read N- to C-terminus: Cystatin-12 (128 aa).

An N-terminal signal peptide occupies residues 1-21 (MLWKSVLPVALIVLGIHDCSF). 2 disulfide bridges follow: Cys82-Cys92 and Cys105-Cys125. Asn122 carries N-linked (GlcNAc...) asparagine glycosylation.

Belongs to the cystatin family.

It localises to the secreted. Functionally, may play a specialized role in spermatogenesis. The sequence is that of Cystatin-12 (Cst12) from Rattus norvegicus (Rat).